A 473-amino-acid chain; its full sequence is Probable glycine dehydrogenase (decarboxylating) subunit 2 (473 aa).

The disordered stretch occupies residues 1–40 (MEHYEQARYAPAEGETNEPLLSENDQTTVSVDPSLPDDLT). N6-(pyridoxal phosphate)lysine is present on Lys270.

The protein belongs to the GcvP family. C-terminal subunit subfamily. As to quaternary structure, the glycine cleavage system is composed of four proteins: P, T, L and H. In this organism, the P 'protein' is a heterodimer of two subunits. Requires pyridoxal 5'-phosphate as cofactor.

It carries out the reaction N(6)-[(R)-lipoyl]-L-lysyl-[glycine-cleavage complex H protein] + glycine + H(+) = N(6)-[(R)-S(8)-aminomethyldihydrolipoyl]-L-lysyl-[glycine-cleavage complex H protein] + CO2. Functionally, the glycine cleavage system catalyzes the degradation of glycine. The P protein binds the alpha-amino group of glycine through its pyridoxal phosphate cofactor; CO(2) is released and the remaining methylamine moiety is then transferred to the lipoamide cofactor of the H protein. The polypeptide is Probable glycine dehydrogenase (decarboxylating) subunit 2 (Halobacterium salinarum (strain ATCC 700922 / JCM 11081 / NRC-1) (Halobacterium halobium)).